Consider the following 89-residue polypeptide: UPF0147 protein STK_04605 (89 aa).

The protein belongs to the UPF0147 family.

The sequence is that of UPF0147 protein STK_04605 from Sulfurisphaera tokodaii (strain DSM 16993 / JCM 10545 / NBRC 100140 / 7) (Sulfolobus tokodaii).